A 135-amino-acid polypeptide reads, in one-letter code: uncharacterized protein (135 aa).

Positions 68-135 (DEVDNYIRVF…KKESEDEDEL (68 aa)) form a coiled coil. A disordered region spans residues 88–135 (EKIVGKPPKSTSAPDIDELEEEPDEETEEKSEEKTEKKKKESEDEDEL). Over residues 102–117 (DIDELEEEPDEETEEK) the composition is skewed to acidic residues. Positions 118–129 (SEEKTEKKKKES) are enriched in basic and acidic residues.

This is an uncharacterized protein from Acidianus hospitalis (AFV-1).